The primary structure comprises 259 residues: Bisphosphoglycerate mutase (259 aa).

Position 2 is an N-acetylserine (Ser2). Substrate contacts are provided by residues 10–17 (RHGEGAWN), 23–24 (CS), Arg62, 89–92 (ERHY), Arg100, and 116–117 (RR). Catalysis depends on His11, which acts as the Tele-phosphohistidine intermediate. Glu89 serves as the catalytic Proton donor/acceptor. Thr122 bears the Phosphothreonine mark. Position 189 to 190 (189 to 190 (GN)) interacts with substrate.

Belongs to the phosphoglycerate mutase family. BPG-dependent PGAM subfamily. Homodimer.

The enzyme catalyses (2R)-3-phospho-glyceroyl phosphate = (2R)-2,3-bisphosphoglycerate + H(+). It carries out the reaction (2R)-2-phosphoglycerate = (2R)-3-phosphoglycerate. Its activity is regulated as follows. At alkaline pH BPGM favors the synthase reaction; however, at lower pH the phosphatase reaction is dominant. Inhibited by citrate. Its function is as follows. Plays a major role in regulating hemoglobin oxygen affinity by controlling the levels of its allosteric effector 2,3-bisphosphoglycerate (2,3-BPG). Also exhibits mutase (EC 5.4.2.11) activity. This chain is Bisphosphoglycerate mutase (BPGM), found in Macaca fascicularis (Crab-eating macaque).